The chain runs to 431 residues: uncharacterized protein (431 aa).

This is an uncharacterized protein from Acanthamoeba polyphaga (Amoeba).